The following is a 54-amino-acid chain: Metallothionein-4 (54 aa).

Belongs to the metallothionein superfamily. Type 11 family.

This chain is Metallothionein-4 (MTP4), found in Yarrowia lipolytica (strain CLIB 122 / E 150) (Yeast).